Reading from the N-terminus, the 236-residue chain is 2-C-methyl-D-erythritol 4-phosphate cytidylyltransferase (236 aa).

It belongs to the IspD/TarI cytidylyltransferase family. IspD subfamily. In terms of assembly, homodimer.

The catalysed reaction is 2-C-methyl-D-erythritol 4-phosphate + CTP + H(+) = 4-CDP-2-C-methyl-D-erythritol + diphosphate. It functions in the pathway isoprenoid biosynthesis; isopentenyl diphosphate biosynthesis via DXP pathway; isopentenyl diphosphate from 1-deoxy-D-xylulose 5-phosphate: step 2/6. In terms of biological role, catalyzes the formation of 4-diphosphocytidyl-2-C-methyl-D-erythritol from CTP and 2-C-methyl-D-erythritol 4-phosphate (MEP). The sequence is that of 2-C-methyl-D-erythritol 4-phosphate cytidylyltransferase from Salmonella paratyphi B (strain ATCC BAA-1250 / SPB7).